The following is a 620-amino-acid chain: 1-deoxy-D-xylulose-5-phosphate synthase (620 aa).

Thiamine diphosphate is bound by residues histidine 80 and 121 to 123; that span reads GHS. Mg(2+) is bound at residue aspartate 152. Thiamine diphosphate is bound by residues 153-154, asparagine 181, tyrosine 288, and glutamate 370; that span reads GA. Asparagine 181 lines the Mg(2+) pocket.

Belongs to the transketolase family. DXPS subfamily. In terms of assembly, homodimer. Mg(2+) is required as a cofactor. It depends on thiamine diphosphate as a cofactor.

It carries out the reaction D-glyceraldehyde 3-phosphate + pyruvate + H(+) = 1-deoxy-D-xylulose 5-phosphate + CO2. It participates in metabolic intermediate biosynthesis; 1-deoxy-D-xylulose 5-phosphate biosynthesis; 1-deoxy-D-xylulose 5-phosphate from D-glyceraldehyde 3-phosphate and pyruvate: step 1/1. Its function is as follows. Catalyzes the acyloin condensation reaction between C atoms 2 and 3 of pyruvate and glyceraldehyde 3-phosphate to yield 1-deoxy-D-xylulose-5-phosphate (DXP). This is 1-deoxy-D-xylulose-5-phosphate synthase from Escherichia coli O6:K15:H31 (strain 536 / UPEC).